The primary structure comprises 457 residues: Cysteine--tRNA ligase (457 aa).

Cysteine 30 provides a ligand contact to Zn(2+). A 'HIGH' region motif is present at residues 32–42 (PTVYAPAHIGN). 3 residues coordinate Zn(2+): cysteine 221, histidine 246, and glutamate 250. The 'KMSKS' region motif lies at 278–282 (KMSKS). Residue lysine 281 coordinates ATP.

The protein belongs to the class-I aminoacyl-tRNA synthetase family. In terms of assembly, monomer. Zn(2+) serves as cofactor.

The protein localises to the cytoplasm. The catalysed reaction is tRNA(Cys) + L-cysteine + ATP = L-cysteinyl-tRNA(Cys) + AMP + diphosphate. The sequence is that of Cysteine--tRNA ligase from Opitutus terrae (strain DSM 11246 / JCM 15787 / PB90-1).